Consider the following 94-residue polypeptide: Co-chaperonin GroES (94 aa).

This sequence belongs to the GroES chaperonin family. As to quaternary structure, heptamer of 7 subunits arranged in a ring. Interacts with the chaperonin GroEL.

Its subcellular location is the cytoplasm. Its function is as follows. Together with the chaperonin GroEL, plays an essential role in assisting protein folding. The GroEL-GroES system forms a nano-cage that allows encapsulation of the non-native substrate proteins and provides a physical environment optimized to promote and accelerate protein folding. GroES binds to the apical surface of the GroEL ring, thereby capping the opening of the GroEL channel. This chain is Co-chaperonin GroES, found in Exiguobacterium sibiricum (strain DSM 17290 / CCUG 55495 / CIP 109462 / JCM 13490 / 255-15).